Here is a 431-residue protein sequence, read N- to C-terminus: 23S rRNA (uracil(1939)-C(5))-methyltransferase RlmD (431 aa).

Residues 10–68 (RVTTRQIITVKVNDLDSFGQGVARHNGKALFIPGLLPEESAEVIITEDKKQFARARVSR) enclose the TRAM domain. Residues Cys-81, Cys-87, Cys-90, and Cys-161 each coordinate [4Fe-4S] cluster. Gln-264, Phe-293, Asn-298, Glu-314, Asn-341, and Asp-362 together coordinate S-adenosyl-L-methionine. Cys-388 acts as the Nucleophile in catalysis.

This sequence belongs to the class I-like SAM-binding methyltransferase superfamily. RNA M5U methyltransferase family. RlmD subfamily.

The enzyme catalyses uridine(1939) in 23S rRNA + S-adenosyl-L-methionine = 5-methyluridine(1939) in 23S rRNA + S-adenosyl-L-homocysteine + H(+). Functionally, catalyzes the formation of 5-methyl-uridine at position 1939 (m5U1939) in 23S rRNA. The chain is 23S rRNA (uracil(1939)-C(5))-methyltransferase RlmD from Salmonella typhi.